We begin with the raw amino-acid sequence, 26 residues long: Thrombopoietin (26 aa).

The protein belongs to the EPO/TPO family.

Its subcellular location is the secreted. Lineage-specific cytokine affecting the proliferation and maturation of megakaryocytes from their committed progenitor cells. It acts at a late stage of megakaryocyte development. It may be the major physiological regulator of circulating platelets. In Sus scrofa (Pig), this protein is Thrombopoietin (THPO).